The primary structure comprises 239 residues: uncharacterized protein (239 aa).

A run of 7 helical transmembrane segments spans residues I20–L40, F48–L68, W80–F100, I106–F126, L143–V163, M164–H184, and I192–F212.

It belongs to the cytomegalovirus US12 family.

Its subcellular location is the membrane. This is an uncharacterized protein from Homo sapiens (Human).